The chain runs to 312 residues: Methionyl-tRNA formyltransferase (312 aa).

109 to 112 contacts (6S)-5,6,7,8-tetrahydrofolate; it reads SLLP.

This sequence belongs to the Fmt family.

It catalyses the reaction L-methionyl-tRNA(fMet) + (6R)-10-formyltetrahydrofolate = N-formyl-L-methionyl-tRNA(fMet) + (6S)-5,6,7,8-tetrahydrofolate + H(+). Attaches a formyl group to the free amino group of methionyl-tRNA(fMet). The formyl group appears to play a dual role in the initiator identity of N-formylmethionyl-tRNA by promoting its recognition by IF2 and preventing the misappropriation of this tRNA by the elongation apparatus. This is Methionyl-tRNA formyltransferase from Anaeromyxobacter dehalogenans (strain 2CP-C).